Here is a 210-residue protein sequence, read N- to C-terminus: Adenylate kinase (210 aa).

Residue 10-15 (GSGKGT) participates in ATP binding. The NMP stretch occupies residues 28–57 (SVGKVLRTVMESNTAEADVVKKFIKSGKLV). Residues Arg-34, 55-57 (KLV), 83-86 (GYPR), and Gln-90 each bind AMP. Residues 120-158 (GRISCTDCGTIYNKLYCMPKINGVCDICNSSSFQNRVDD) are LID. Position 121 (Arg-121) interacts with ATP. The Zn(2+) site is built by Cys-124 and Cys-127. 130 to 131 (IY) serves as a coordination point for ATP. Positions 144 and 147 each coordinate Zn(2+). AMP is bound by residues Arg-155 and Arg-166. Residue Gln-194 coordinates ATP.

The protein belongs to the adenylate kinase family. As to quaternary structure, monomer.

It is found in the cytoplasm. It carries out the reaction AMP + ATP = 2 ADP. The protein operates within purine metabolism; AMP biosynthesis via salvage pathway; AMP from ADP: step 1/1. Its function is as follows. Catalyzes the reversible transfer of the terminal phosphate group between ATP and AMP. Plays an important role in cellular energy homeostasis and in adenine nucleotide metabolism. The polypeptide is Adenylate kinase (Orientia tsutsugamushi (strain Boryong) (Rickettsia tsutsugamushi)).